Reading from the N-terminus, the 558-residue chain is Formate--tetrahydrofolate ligase (558 aa).

67–74 is an ATP binding site; the sequence is TPAGEGKT.

This sequence belongs to the formate--tetrahydrofolate ligase family.

It catalyses the reaction (6S)-5,6,7,8-tetrahydrofolate + formate + ATP = (6R)-10-formyltetrahydrofolate + ADP + phosphate. The protein operates within one-carbon metabolism; tetrahydrofolate interconversion. The polypeptide is Formate--tetrahydrofolate ligase (Ruegeria pomeroyi (strain ATCC 700808 / DSM 15171 / DSS-3) (Silicibacter pomeroyi)).